The chain runs to 221 residues: Ribosomal RNA large subunit methyltransferase E (221 aa).

S-adenosyl-L-methionine is bound by residues Gly-60, Trp-62, Asp-89, Asp-105, and Asp-134. Lys-174 acts as the Proton acceptor in catalysis.

Belongs to the class I-like SAM-binding methyltransferase superfamily. RNA methyltransferase RlmE family.

It localises to the cytoplasm. It carries out the reaction uridine(2552) in 23S rRNA + S-adenosyl-L-methionine = 2'-O-methyluridine(2552) in 23S rRNA + S-adenosyl-L-homocysteine + H(+). Specifically methylates the uridine in position 2552 of 23S rRNA at the 2'-O position of the ribose in the fully assembled 50S ribosomal subunit. The sequence is that of Ribosomal RNA large subunit methyltransferase E from Cupriavidus metallidurans (strain ATCC 43123 / DSM 2839 / NBRC 102507 / CH34) (Ralstonia metallidurans).